The chain runs to 381 residues: MNPLQTGPWQTSAPSFWLLKFSFIWLVSQNCCTASAVWTAYMNISFHVGNRMLSELGETGVFGRSSILKRVAGVVVPPEGKIQNACDPNTSFILPRNKEPWIALIERGGCAFTQKIKVASENGARGVIIYNFPGTGNQVFPMSHQAFEDIVVVMIGNVKGMEILHLIRKGVHVTVMVEVGRKHVIWLNHYFVSFMIVTTATLAYFTFYHIRRLWVARIEDRRWKRLTRELKKAFGQLQVRILKEGDEEVSPNADSCVICFEAYKPNEIVRILTCKHFFHKNCIDPWILAHGTCPMCKCDILKALGIQMDIEDGSDSLQVLMSNELPGTFSAMEEELNNELPPARTSSKVTHVQEHPTSVNVGSQPPEAEETGHPSFGQHDL.

The 103-residue stretch at 65-167 (SSILKRVAGV…VKGMEILHLI (103 aa)) folds into the PA domain. Residues 186-208 (WLNHYFVSFMIVTTATLAYFTFY) form a helical membrane-spanning segment. Residues 256–297 (CVICFEAYKPNEIVRILTCKHFFHKNCIDPWILAHGTCPMCK) form an RING-type; atypical zinc finger. Positions 340–381 (LPPARTSSKVTHVQEHPTSVNVGSQPPEAEETGHPSFGQHDL) are disordered. Positions 344–363 (RTSSKVTHVQEHPTSVNVGS) are enriched in polar residues.

In terms of assembly, interacts with E3 ligase UBE2J1. Auto-ubiquitinated.

The protein localises to the endoplasmic reticulum membrane. It carries out the reaction S-ubiquitinyl-[E2 ubiquitin-conjugating enzyme]-L-cysteine + [acceptor protein]-L-lysine = [E2 ubiquitin-conjugating enzyme]-L-cysteine + N(6)-ubiquitinyl-[acceptor protein]-L-lysine.. It functions in the pathway protein modification; protein ubiquitination. Functionally, has E3 ubiquitin-protein ligase activity. Plays a role in male fecundity through the interaction with the E2 ubituitin-protein ligase UBE2J1. This chain is E3 ubiquitin-protein ligase RNF133 (Rnf133), found in Rattus norvegicus (Rat).